Here is a 177-residue protein sequence, read N- to C-terminus: MMETKEKVVYPRYAVIRLRGIPTTPRDIATTLHLLRLRRKFTMVVVPGTPSIIGMIQKVNDWVTWGEIDADTLAEVLKKRGRIVGDKPLTLEYLQKWGWQSFEEVALAYITGEIDSLSCRKVRVREGQRPPCIPYLKPFFRLHPPRGGLNSVKLHFSVGGDLGYRGPLINDLIRRML.

Belongs to the universal ribosomal protein uL30 family. Part of the 50S ribosomal subunit.

The chain is Large ribosomal subunit protein uL30 from Pyrobaculum islandicum (strain DSM 4184 / JCM 9189 / GEO3).